The primary structure comprises 368 residues: UDP-N-acetylglucosamine--N-acetylmuramyl-(pentapeptide) pyrophosphoryl-undecaprenol N-acetylglucosamine transferase (368 aa).

UDP-N-acetyl-alpha-D-glucosamine contacts are provided by residues 13 to 15 (TGG), Asn-124, Arg-167, Ser-195, and Gln-296.

It belongs to the glycosyltransferase 28 family. MurG subfamily.

The protein resides in the cell inner membrane. The catalysed reaction is di-trans,octa-cis-undecaprenyl diphospho-N-acetyl-alpha-D-muramoyl-L-alanyl-D-glutamyl-meso-2,6-diaminopimeloyl-D-alanyl-D-alanine + UDP-N-acetyl-alpha-D-glucosamine = di-trans,octa-cis-undecaprenyl diphospho-[N-acetyl-alpha-D-glucosaminyl-(1-&gt;4)]-N-acetyl-alpha-D-muramoyl-L-alanyl-D-glutamyl-meso-2,6-diaminopimeloyl-D-alanyl-D-alanine + UDP + H(+). Its pathway is cell wall biogenesis; peptidoglycan biosynthesis. Functionally, cell wall formation. Catalyzes the transfer of a GlcNAc subunit on undecaprenyl-pyrophosphoryl-MurNAc-pentapeptide (lipid intermediate I) to form undecaprenyl-pyrophosphoryl-MurNAc-(pentapeptide)GlcNAc (lipid intermediate II). This Maricaulis maris (strain MCS10) (Caulobacter maris) protein is UDP-N-acetylglucosamine--N-acetylmuramyl-(pentapeptide) pyrophosphoryl-undecaprenol N-acetylglucosamine transferase.